A 328-amino-acid polypeptide reads, in one-letter code: Arabinose 5-phosphate isomerase KdsD (328 aa).

The SIS domain occupies A41–F184. Residues G75 to T76, H82, H88, T114 to K123, and N148 to P150 each bind substrate. Zn(2+) is bound at residue H82. In terms of domain architecture, CBS 1 spans M210–L268. D275 lines the substrate pocket. One can recognise a CBS 2 domain in the interval M277–V328.

It belongs to the SIS family. GutQ/KpsF subfamily. Homotetramer.

It catalyses the reaction D-arabinose 5-phosphate = D-ribulose 5-phosphate. The protein operates within carbohydrate biosynthesis; 3-deoxy-D-manno-octulosonate biosynthesis; 3-deoxy-D-manno-octulosonate from D-ribulose 5-phosphate: step 1/3. It functions in the pathway bacterial outer membrane biogenesis; lipopolysaccharide biosynthesis. In terms of biological role, involved in the biosynthesis of 3-deoxy-D-manno-octulosonate (KDO), a unique 8-carbon sugar component of lipopolysaccharides (LPSs). Catalyzes the reversible aldol-ketol isomerization between D-ribulose 5-phosphate (Ru5P) and D-arabinose 5-phosphate (A5P). The sequence is that of Arabinose 5-phosphate isomerase KdsD (kdsD) from Yersinia pestis.